Here is a 186-residue protein sequence, read N- to C-terminus: Peptidyl-tRNA hydrolase (186 aa).

TRNA is bound at residue Tyr-14. His-19 serves as the catalytic Proton acceptor. TRNA-binding residues include Phe-64, Asn-66, and Asn-112.

The protein belongs to the PTH family. Monomer.

It is found in the cytoplasm. The catalysed reaction is an N-acyl-L-alpha-aminoacyl-tRNA + H2O = an N-acyl-L-amino acid + a tRNA + H(+). Functionally, hydrolyzes ribosome-free peptidyl-tRNAs (with 1 or more amino acids incorporated), which drop off the ribosome during protein synthesis, or as a result of ribosome stalling. Catalyzes the release of premature peptidyl moieties from peptidyl-tRNA molecules trapped in stalled 50S ribosomal subunits, and thus maintains levels of free tRNAs and 50S ribosomes. This chain is Peptidyl-tRNA hydrolase, found in Anaplasma marginale (strain St. Maries).